Reading from the N-terminus, the 563-residue chain is Glucocorticoid modulatory element-binding protein 1 (563 aa).

N-acetylalanine is present on A2. One can recognise an SAND domain in the interval 72 to 156; sequence ASTIEANEDM…RKMMDSGQID (85 aa). C103 is a binding site for Zn(2+). Residues K129, K133, K136, and R147 each coordinate DNA. Residues H160, C164, and C168 each contribute to the Zn(2+) site. Positions 304–355 form a coiled coil; the sequence is MDTVKKVLDNRKNQVEQGEEQFLYTLTDLERQLEEQKKQAQDHRLKSQTVQN. The segment at 360–385 is disordered; sequence PVSTPKPPKRPRLQRPASTTVLSPSP.

As to quaternary structure, homodimer, and heterodimer of GMEB1 and GMEB2. Interacts with TRIM63. Interacts with the glucocorticoid receptor (NR3C1) and NCOA2/TIF2. May interact with HSP27 and CREB-binding protein (CBP).

It localises to the nucleus. It is found in the cytoplasm. Trans-acting factor that binds to glucocorticoid modulatory elements (GME) present in the TAT (tyrosine aminotransferase) promoter and increases sensitivity to low concentrations of glucocorticoids. Also binds to the transferrin receptor promoter. The chain is Glucocorticoid modulatory element-binding protein 1 (GMEB1) from Bos taurus (Bovine).